The primary structure comprises 512 residues: MQLNPSEISELIKSKIQNLQGASEVRTQGTVVSVTDGICRVHGLQDVMQGEMLEFPGNTFGMALNLERDSVGAVVLGEYEHISEGDIVKTTGRILEVPVGPELLGRVVNSLGQPIDGKGPINAKLTDKIEKVAPGVIWRQSVSQPVQTGLKCVDSMVPVGRGQRELIIGDRQTGKTAVAVDAIINQKGKGLFCVYVAIGQKASTIANVVRKLEEHGAMEYTIVVAAPASESAALQYLAPYAGCTMGEYFRDTGEDALIIYDDLTKQAWGYRQVSLLLRRPPGREAYPGDVFYLHSRLLERAARVSAAWVEKLSNGAIKGKTGSLTALPVIETQAGDVSAFVPTNVISITDGQIFLETDLFNAGIRPAINAGISVSRVGGAAQTKLIKKLGGGVRLALAQYRELAAFAQFASDLDEATRKQLERGRLVTELMKQPQYSPMSISEMAVTLYAADKGYFDDVEVKRALECEKAMIGYLKTNCADLMKTMESTADLSADSEKQLAAGIAAFKSSWV.

169–176 (GDRQTGKT) contacts ATP.

This sequence belongs to the ATPase alpha/beta chains family. In terms of assembly, F-type ATPases have 2 components, CF(1) - the catalytic core - and CF(0) - the membrane proton channel. CF(1) has five subunits: alpha(3), beta(3), gamma(1), delta(1), epsilon(1). CF(0) has three main subunits: a(1), b(2) and c(9-12). The alpha and beta chains form an alternating ring which encloses part of the gamma chain. CF(1) is attached to CF(0) by a central stalk formed by the gamma and epsilon chains, while a peripheral stalk is formed by the delta and b chains.

The protein localises to the cell inner membrane. The catalysed reaction is ATP + H2O + 4 H(+)(in) = ADP + phosphate + 5 H(+)(out). Its function is as follows. Produces ATP from ADP in the presence of a proton gradient across the membrane. The alpha chain is a regulatory subunit. The polypeptide is ATP synthase subunit alpha (Dechloromonas aromatica (strain RCB)).